The following is a 58-amino-acid chain: Small ribosomal subunit protein bS21C (58 aa).

The disordered stretch occupies residues 38–58 (YEKPSLRRKRKAEAARKGGRY). Residues 49–58 (AEAARKGGRY) are compositionally biased toward basic and acidic residues.

Belongs to the bacterial ribosomal protein bS21 family.

This Nostoc sp. (strain PCC 7120 / SAG 25.82 / UTEX 2576) protein is Small ribosomal subunit protein bS21C (rpsU3).